A 248-amino-acid chain; its full sequence is Probable transcriptional regulatory protein Oter_1471 (248 aa).

This sequence belongs to the TACO1 family.

Its subcellular location is the cytoplasm. The chain is Probable transcriptional regulatory protein Oter_1471 from Opitutus terrae (strain DSM 11246 / JCM 15787 / PB90-1).